We begin with the raw amino-acid sequence, 287 residues long: Bifunctional protein FolD (287 aa).

NADP(+) contacts are provided by residues 167–169 (GRS) and Thr-192.

This sequence belongs to the tetrahydrofolate dehydrogenase/cyclohydrolase family. As to quaternary structure, homodimer.

It catalyses the reaction (6R)-5,10-methylene-5,6,7,8-tetrahydrofolate + NADP(+) = (6R)-5,10-methenyltetrahydrofolate + NADPH. The enzyme catalyses (6R)-5,10-methenyltetrahydrofolate + H2O = (6R)-10-formyltetrahydrofolate + H(+). The protein operates within one-carbon metabolism; tetrahydrofolate interconversion. Functionally, catalyzes the oxidation of 5,10-methylenetetrahydrofolate to 5,10-methenyltetrahydrofolate and then the hydrolysis of 5,10-methenyltetrahydrofolate to 10-formyltetrahydrofolate. This Sorangium cellulosum (strain So ce56) (Polyangium cellulosum (strain So ce56)) protein is Bifunctional protein FolD.